The following is a 180-amino-acid chain: Large ribosomal subunit protein uL5 (180 aa).

It belongs to the universal ribosomal protein uL5 family. In terms of assembly, part of the 50S ribosomal subunit; part of the 5S rRNA/L5/L18/L25 subcomplex. Contacts the 5S rRNA and the P site tRNA. Forms a bridge to the 30S subunit in the 70S ribosome.

This is one of the proteins that bind and probably mediate the attachment of the 5S RNA into the large ribosomal subunit, where it forms part of the central protuberance. In the 70S ribosome it contacts protein S13 of the 30S subunit (bridge B1b), connecting the 2 subunits; this bridge is implicated in subunit movement. Contacts the P site tRNA; the 5S rRNA and some of its associated proteins might help stabilize positioning of ribosome-bound tRNAs. This Lactobacillus johnsonii (strain CNCM I-12250 / La1 / NCC 533) protein is Large ribosomal subunit protein uL5.